A 132-amino-acid polypeptide reads, in one-letter code: Small ribosomal subunit protein uS8 (132 aa).

It belongs to the universal ribosomal protein uS8 family. Part of the 30S ribosomal subunit. Contacts proteins S5 and S12.

One of the primary rRNA binding proteins, it binds directly to 16S rRNA central domain where it helps coordinate assembly of the platform of the 30S subunit. This is Small ribosomal subunit protein uS8 from Rhizobium rhizogenes (strain K84 / ATCC BAA-868) (Agrobacterium radiobacter).